A 795-amino-acid polypeptide reads, in one-letter code: Nucleolar complex protein 3 homolog (795 aa).

Disordered stretches follow at residues M1–M88, R124–K144, and I168–E190. 2 stretches are compositionally biased toward basic and acidic residues: residues L22–A39 and Q46–S58. Residues E74–M88 show a composition bias toward acidic residues. Positions E171 to D181 are enriched in acidic residues. The stretch at S447–T492 forms a coiled coil.

The protein belongs to the CBF/MAK21 family.

The protein localises to the nucleus. It localises to the nucleolus. The sequence is that of Nucleolar complex protein 3 homolog (noc3l) from Xenopus laevis (African clawed frog).